Consider the following 274-residue polypeptide: Putative HTH-type transcriptional regulator RmpR (274 aa).

Positions 18–88 (IERADAIVER…RSGGTFVVNQ (71 aa)) constitute an HTH gntR-type domain. The H-T-H motif DNA-binding region spans 46 to 65 (EAALSEMFGVGGATLREALS). Residues 250–265 (SRPSSPATAPDGSSSA) show a composition bias toward polar residues. Positions 250-274 (SRPSSPATAPDGSSSAEAAMIQEGQ) are disordered.

Functionally, may regulate the transcription of the rmpAB operon. The polypeptide is Putative HTH-type transcriptional regulator RmpR (rmpR) (Mycobacterium gastri).